Here is a 411-residue protein sequence, read N- to C-terminus: Lissencephaly-1 homolog (411 aa).

A LisH domain is found at 9–41 (QREELNQAIADYLGTNGYADSLEAFRKEADLST). Residues 56 to 83 (TSVIRLQKKVMELEAKLTEAEKEVIEGA) are a coiled coil. WD repeat units lie at residues 106–147 (GHRA…RTLK), 148–187 (GHTD…ECVK), 191–230 (GHDH…CVKT), 233–272 (GHRE…CKVE), 275–334 (DHEH…CLLT), 337–376 (GHDN…CMKT), and 379–411 (AHQH…WECR).

This sequence belongs to the WD repeat LIS1/nudF family.

The protein resides in the cytoplasm. It localises to the cytoskeleton. It is found in the microtubule organizing center. The protein localises to the centrosome. Functionally, positively regulates the activity of the minus-end directed microtubule motor protein dynein. May enhance dynein-mediated microtubule sliding by targeting dynein to the microtubule plus end. Required for several dynein- and microtubule-dependent processes. The polypeptide is Lissencephaly-1 homolog (Drosophila grimshawi (Hawaiian fruit fly)).